Reading from the N-terminus, the 187-residue chain is MGKKSSKLKQDTIDRLTTDTYFTEKEIRQWHKGFLKDCPNGLLTEQGFIKIYKQFFPQGDPSKFASLVFRVFDENNDGSIEFEEFIRALSVTSKGNLDEKLQWAFRLYDVDNDGYITREEMYNIVDAIYQMVGQQPQSEDENTPQKRVDKIFDQMDKNHDGKLTLEEFREGSKADPRIVQALSLGGG.

Gly2 carries N-myristoyl glycine lipidation. EF-hand domains follow at residues Glu24–Gly59, Asp60–Gly95, Asn96–Met131, and Thr143–Ile178. Ca(2+) contacts are provided by Asp73, Asn75, Asp77, Ser79, Glu84, Asp109, Asp111, Asp113, Tyr115, Glu120, Asp156, Asn158, Asp160, Lys162, and Glu167.

Belongs to the recoverin family. In terms of assembly, in contrast to Frq2, does not interact with ric8a. Enriched in synapses, such as the motor nerve endings at neuromuscular junctions. In the embryo, highly expressed in the ventral ganglia.

It is found in the cytoplasm. Its function is as follows. Ca(2+)-dependent modulation of synaptic efficacy. Also plays a role in axon terminal morphology. This Drosophila melanogaster (Fruit fly) protein is Frequenin-1 (Frq1).